We begin with the raw amino-acid sequence, 324 residues long: Thiazole synthase (324 aa).

Lys-167 (schiff-base intermediate with DXP) is an active-site residue. Residues Gly-228, 254 to 255 (AG), and 276 to 277 (NT) each bind 1-deoxy-D-xylulose 5-phosphate.

It belongs to the ThiG family. In terms of assembly, homotetramer. Forms heterodimers with either ThiH or ThiS.

It localises to the cytoplasm. It catalyses the reaction [ThiS sulfur-carrier protein]-C-terminal-Gly-aminoethanethioate + 2-iminoacetate + 1-deoxy-D-xylulose 5-phosphate = [ThiS sulfur-carrier protein]-C-terminal Gly-Gly + 2-[(2R,5Z)-2-carboxy-4-methylthiazol-5(2H)-ylidene]ethyl phosphate + 2 H2O + H(+). The protein operates within cofactor biosynthesis; thiamine diphosphate biosynthesis. Catalyzes the rearrangement of 1-deoxy-D-xylulose 5-phosphate (DXP) to produce the thiazole phosphate moiety of thiamine. Sulfur is provided by the thiocarboxylate moiety of the carrier protein ThiS. In vitro, sulfur can be provided by H(2)S. This chain is Thiazole synthase, found in Paramagnetospirillum magneticum (strain ATCC 700264 / AMB-1) (Magnetospirillum magneticum).